Here is a 379-residue protein sequence, read N- to C-terminus: Alcohol dehydrogenase class-3 (379 aa).

Ser2 is subject to N-acetylserine. 7 residues coordinate Zn(2+): Cys48, His70, Cys100, Cys103, Cys106, Cys114, and Cys177.

The protein belongs to the zinc-containing alcohol dehydrogenase family. Class-III subfamily. Zn(2+) is required as a cofactor.

The catalysed reaction is a primary alcohol + NAD(+) = an aldehyde + NADH + H(+). It carries out the reaction a secondary alcohol + NAD(+) = a ketone + NADH + H(+). The enzyme catalyses S-(hydroxymethyl)glutathione + NADP(+) = S-formylglutathione + NADPH + H(+). It catalyses the reaction S-(hydroxymethyl)glutathione + NAD(+) = S-formylglutathione + NADH + H(+). The catalysed reaction is octan-1-ol + NAD(+) = octanal + NADH + H(+). Its function is as follows. Class-III ADH is remarkably ineffective in oxidizing ethanol, but it readily catalyzes the oxidation of long-chain primary alcohols and the oxidation of S-(hydroxymethyl) glutathione. The protein is Alcohol dehydrogenase class-3 (Fdh) of Drosophila melanogaster (Fruit fly).